The following is a 350-amino-acid chain: 2-oxoglutarate-dependent ethylene/succinate-forming enzyme (350 aa).

One can recognise a Fe2OG dioxygenase domain in the interval 166-286; that stretch reads GWHHMRVLRF…RFACAYFHEP (121 aa). His189 and His268 together coordinate Fe cation.

Belongs to the iron/ascorbate-dependent oxidoreductase family. As to quaternary structure, monomer. The cofactor is Fe(2+).

It carries out the reaction 2-oxoglutarate + O2 + 2 H(+) = ethene + 3 CO2 + H2O. The enzyme catalyses L-arginine + 2-oxoglutarate + O2 = guanidine + L-glutamate 5-semialdehyde + succinate + CO2. The protein operates within alkene biosynthesis; ethylene biosynthesis via 2-oxoglutarate. Activated by catalase. Inhibited by chelating reagents such as EDTA and Tiron (4,5-dihydroxy-1,3-benzene disulphonic acid), and by DTNB (5,5'-dithio-bis-2-nitrobenzoate) and hydrogen peroxide. In terms of biological role, simultaneously catalyzes two reactions, namely formation of ethylene and of succinate from 2-oxoglutarate, with a molar ratio of 2:1. This is 2-oxoglutarate-dependent ethylene/succinate-forming enzyme (efe) from Pseudomonas savastanoi pv. phaseolicola (Pseudomonas syringae pv. phaseolicola).